Here is a 399-residue protein sequence, read N- to C-terminus: Succinate--CoA ligase [ADP-forming] subunit beta (399 aa).

Residues 9-254 (KAVLQPFGVS…TTEEDAKEIE (246 aa)) form the ATP-grasp domain. Residues lysine 46, 53-55 (GRG), glutamate 109, serine 112, and glutamate 117 each bind ATP. The Mg(2+) site is built by asparagine 209 and aspartate 223. Substrate-binding positions include asparagine 274 and 331 to 333 (GIM).

It belongs to the succinate/malate CoA ligase beta subunit family. As to quaternary structure, heterotetramer of two alpha and two beta subunits. The cofactor is Mg(2+).

It carries out the reaction succinate + ATP + CoA = succinyl-CoA + ADP + phosphate. It catalyses the reaction GTP + succinate + CoA = succinyl-CoA + GDP + phosphate. Its pathway is carbohydrate metabolism; tricarboxylic acid cycle; succinate from succinyl-CoA (ligase route): step 1/1. Functionally, succinyl-CoA synthetase functions in the citric acid cycle (TCA), coupling the hydrolysis of succinyl-CoA to the synthesis of either ATP or GTP and thus represents the only step of substrate-level phosphorylation in the TCA. The beta subunit provides nucleotide specificity of the enzyme and binds the substrate succinate, while the binding sites for coenzyme A and phosphate are found in the alpha subunit. The polypeptide is Succinate--CoA ligase [ADP-forming] subunit beta (Rhodopseudomonas palustris (strain BisA53)).